The sequence spans 405 residues: Tryptophan synthase beta chain (405 aa).

N6-(pyridoxal phosphate)lysine is present on K98.

Belongs to the TrpB family. In terms of assembly, tetramer of two alpha and two beta chains. It depends on pyridoxal 5'-phosphate as a cofactor.

It carries out the reaction (1S,2R)-1-C-(indol-3-yl)glycerol 3-phosphate + L-serine = D-glyceraldehyde 3-phosphate + L-tryptophan + H2O. It functions in the pathway amino-acid biosynthesis; L-tryptophan biosynthesis; L-tryptophan from chorismate: step 5/5. The beta subunit is responsible for the synthesis of L-tryptophan from indole and L-serine. The protein is Tryptophan synthase beta chain of Methylococcus capsulatus (strain ATCC 33009 / NCIMB 11132 / Bath).